Reading from the N-terminus, the 711-residue chain is Polyribonucleotide nucleotidyltransferase (711 aa).

Mg(2+)-binding residues include Asp-487 and Asp-493. The region spanning 554–613 is the KH domain; sequence PRIHTMKISAEKIKDVIGKGGAVIRALTEETGTTIEIEDDGTIKIAATEGAAAKEAIRRI. Residues 623-691 form the S1 motif domain; sequence GRIYTGKVAR…RQGRVRLSMK (69 aa). The tract at residues 691-711 is disordered; that stretch reads KEAVEKPAEEAAAEAPAAKEE.

It belongs to the polyribonucleotide nucleotidyltransferase family. Component of the RNA degradosome, which is a multiprotein complex involved in RNA processing and mRNA degradation. It depends on Mg(2+) as a cofactor.

The protein resides in the cytoplasm. The enzyme catalyses RNA(n+1) + phosphate = RNA(n) + a ribonucleoside 5'-diphosphate. Its function is as follows. Involved in mRNA degradation. Catalyzes the phosphorolysis of single-stranded polyribonucleotides processively in the 3'- to 5'-direction. This is Polyribonucleotide nucleotidyltransferase from Vibrio parahaemolyticus serotype O3:K6 (strain RIMD 2210633).